Reading from the N-terminus, the 75-residue chain is Exodeoxyribonuclease 7 small subunit (75 aa).

It belongs to the XseB family. As to quaternary structure, heterooligomer composed of large and small subunits.

The protein resides in the cytoplasm. It catalyses the reaction Exonucleolytic cleavage in either 5'- to 3'- or 3'- to 5'-direction to yield nucleoside 5'-phosphates.. In terms of biological role, bidirectionally degrades single-stranded DNA into large acid-insoluble oligonucleotides, which are then degraded further into small acid-soluble oligonucleotides. This is Exodeoxyribonuclease 7 small subunit from Pelobacter propionicus (strain DSM 2379 / NBRC 103807 / OttBd1).